Here is a 288-residue protein sequence, read N- to C-terminus: MIIKFIQIIKPGIIFGNIISTIGGFLLASQGDINVNLFIFTISATAILIASASIFNNCIDKDIDIKMQRTKNRAIAIGLISSNIAYIYALILLILSFLLFLKTNFLTIFISMLGFFIYVFIYSLLMKRKSVYSTIIGSLSGATPPIIGYCSVKEHFDIGAFILLCIFSFWQIPHSYAIGLVRYNDYKIASIPIFPIKKGSFKTKINIIIYIIAFFISTIMLFFAGYTGNNYLFFSIFFGLIWIFIAIKGFKSSEENFNIIWGRKIFLFSIVIITAISILISIDYKKNI.

A run of 9 helical transmembrane segments spans residues 8-28, 35-55, 75-95, 105-125, 130-150, 161-181, 205-225, 230-250, and 265-285; these read IIKP…FLLA, VNLF…ASIF, IAIG…LLIL, FLTI…YSLL, SVYS…IGYC, FILL…IGLV, INII…FFAG, NYLF…IKGF, and IFLF…IDYK.

Belongs to the UbiA prenyltransferase family. Protoheme IX farnesyltransferase subfamily.

It localises to the cell membrane. The catalysed reaction is heme b + (2E,6E)-farnesyl diphosphate + H2O = Fe(II)-heme o + diphosphate. Its pathway is porphyrin-containing compound metabolism; heme O biosynthesis; heme O from protoheme: step 1/1. Its function is as follows. Converts heme B (protoheme IX) to heme O by substitution of the vinyl group on carbon 2 of heme B porphyrin ring with a hydroxyethyl farnesyl side group. The chain is Protoheme IX farnesyltransferase from Wigglesworthia glossinidia brevipalpis.